Here is a 409-residue protein sequence, read N- to C-terminus: Nucleoprotein (409 aa).

Disordered stretches follow at residues 1–32, 44–69, 121–145, 164–195, and 238–259; these read MASG…SSGN, LNSP…QQHG, ADVK…LRFS, RSGR…SEGD, and VDQV…DKMN. Positions 15–31 are enriched in low complexity; that stretch reads PVIKLGGPKPPKVGSSG. An RNA-binding region spans residues 29 to 160; that stretch reads SSGNASWFQA…GNFRWDFIPL (132 aa). The region spanning 31–156 is the CoV N NTD domain; that stretch reads GNASWFQAIK…GGPDGNFRWD (126 aa). Residues 164-179 are compositionally biased toward low complexity; that stretch reads RSGRSTAASSAASSRA. 2 stretches are compositionally biased toward basic and acidic residues: residues 180-192 and 247-259; these read PSRD…RSGS and KGKE…DKMN. Phosphoserine; by host occurs at positions 190 and 192. Residues 215–331 enclose the CoV N CTD domain; it reads TKAKADEMAH…QCVDGVGTRP (117 aa). Positions 226–333 are dimerization; it reads RYCKRTIPPG…VDGVGTRPKD (108 aa). A disulfide bond links C320 and C323. A disordered region spans residues 326–409; that stretch reads GVGTRPKDDE…GDSALGENEL (84 aa). The segment covering 341-358 has biased composition (low complexity); sequence RSSSRPATRTSSPALRQQ. Basic and acidic residues predominate over residues 368–384; sequence KQDDEVDKALTSDEERN. At T378 the chain carries Phosphothreonine; by host. The residue at position 379 (S379) is a Phosphoserine; by host.

Belongs to the gammacoronavirus nucleocapsid protein family. In terms of assembly, homooligomer. Both monomeric and oligomeric forms interact with RNA. Interacts with protein M. Interacts with NSP3; this interaction serves to tether the genome to the newly translated replicase-transcriptase complex at a very early stage of infection. Post-translationally, ADP-ribosylated. The ADP-ribosylation is retained in the virion during infection. Phosphorylated on serine and threonine residues.

It is found in the virion. The protein localises to the host endoplasmic reticulum-Golgi intermediate compartment. It localises to the host Golgi apparatus. Packages the positive strand viral genome RNA into a helical ribonucleocapsid (RNP) and plays a fundamental role during virion assembly through its interactions with the viral genome and membrane protein M. Plays an important role in enhancing the efficiency of subgenomic viral RNA transcription as well as viral replication. In Gallus gallus (Chicken), this protein is Nucleoprotein.